The chain runs to 821 residues: Palmitoyltransferase AKR1 (821 aa).

Positions methionine 1–aspartate 118 are disordered. The Cytoplasmic segment spans residues methionine 1–lysine 400. Positions isoleucine 93–methionine 117 are enriched in basic and acidic residues. 6 ANK repeats span residues proline 142–aspartate 172, aspartate 176–aspartate 205, leucine 213–leucine 243, glutamine 247–threonine 277, cysteine 289–lysine 318, and asparagine 322–alanine 351. The chain crosses the membrane as a helical span at residues leucine 401–tyrosine 421. A topological domain (lumenal) is located at residue asparagine 422. A helical transmembrane segment spans residues glycine 423–leucine 443. The Cytoplasmic segment spans residues glutamine 444–leucine 463. A helical membrane pass occupies residues leucine 464–isoleucine 484. At proline 485–serine 494 the chain is on the lumenal side. A helical membrane pass occupies residues asparagine 495–isoleucine 515. Over asparagine 516–lysine 589 the chain is Cytoplasmic. A DHHC domain is found at asparagine 546 to tyrosine 596. Cysteine 576 functions as the S-palmitoyl cysteine intermediate in the catalytic mechanism. Residues leucine 590–isoleucine 610 form a helical membrane-spanning segment. The Lumenal portion of the chain corresponds to lysine 611–asparagine 650. The helical transmembrane segment at leucine 651–phenylalanine 671 threads the bilayer. At glutamine 672 to alanine 821 the chain is on the cytoplasmic side.

The protein belongs to the DHHC palmitoyltransferase family. AKR/ZDHHC17 subfamily.

It is found in the early endosome membrane. The protein localises to the golgi apparatus membrane. The catalysed reaction is L-cysteinyl-[protein] + hexadecanoyl-CoA = S-hexadecanoyl-L-cysteinyl-[protein] + CoA. In terms of biological role, palmitoyltransferase specific for casein kinase 1. The sequence is that of Palmitoyltransferase AKR1 (AKR1) from Debaryomyces hansenii (strain ATCC 36239 / CBS 767 / BCRC 21394 / JCM 1990 / NBRC 0083 / IGC 2968) (Yeast).